The chain runs to 251 residues: 5-oxoprolinase subunit A (251 aa).

The protein belongs to the LamB/PxpA family. Forms a complex composed of PxpA, PxpB and PxpC.

It catalyses the reaction 5-oxo-L-proline + ATP + 2 H2O = L-glutamate + ADP + phosphate + H(+). Its function is as follows. Catalyzes the cleavage of 5-oxoproline to form L-glutamate coupled to the hydrolysis of ATP to ADP and inorganic phosphate. This chain is 5-oxoprolinase subunit A, found in Paracidovorax citrulli (strain AAC00-1) (Acidovorax citrulli).